We begin with the raw amino-acid sequence, 227 residues long: ATP-dependent dethiobiotin synthetase BioD (227 aa).

13-18 (DIGKTY) contributes to the ATP binding site. Thr17 serves as a coordination point for Mg(2+). Lys38 is an active-site residue. Ser42 contacts substrate. ATP-binding positions include Asp55, 116–119 (EGSG), and 179–180 (NN). Positions 55 and 116 each coordinate Mg(2+).

Belongs to the dethiobiotin synthetase family. As to quaternary structure, homodimer. It depends on Mg(2+) as a cofactor.

It is found in the cytoplasm. It catalyses the reaction (7R,8S)-7,8-diammoniononanoate + CO2 + ATP = (4R,5S)-dethiobiotin + ADP + phosphate + 3 H(+). It participates in cofactor biosynthesis; biotin biosynthesis; biotin from 7,8-diaminononanoate: step 1/2. Catalyzes a mechanistically unusual reaction, the ATP-dependent insertion of CO2 between the N7 and N8 nitrogen atoms of 7,8-diaminopelargonic acid (DAPA, also called 7,8-diammoniononanoate) to form a ureido ring. This chain is ATP-dependent dethiobiotin synthetase BioD, found in Clostridium botulinum (strain 657 / Type Ba4).